We begin with the raw amino-acid sequence, 244 residues long: RNA transcription, translation and transport factor protein (244 aa).

Lysine 20, lysine 62, and lysine 98 each carry N6-acetyllysine.

This sequence belongs to the RTRAF family. Homodimer. Interacts with FAM98A (via N- and C-terminus). Interacts with NIN; which may prevent phosphorylation of NIN. Interacts with POLR2A. Component of a tRNA-splicing ligase complex with FAM98B, DDX1 and RTCB. As to quaternary structure, (Microbial infection) Interacts with influenza A virus (IAV) RNA polymerase subunits PA, PB1 and PB2, and nucleocapsid NP. Associates with IAV polymerase complexes both in the nucleus and cytosol. Associates with IAV ribonucleoproteins (vRNP) packaged in virions. Interacts with hepatitis C virus core protein p19. In terms of tissue distribution, widely expressed. Expressed at high level in heart and skeletal muscle. Expressed at intermediate level in liver, pancreas, fetal brain and fetal lung. Weakly expressed in adult brain, adult lung, placenta, fetal liver and fetal kidney. Overexpressed in many brain tumors.

Its subcellular location is the nucleus. It localises to the cytoplasm. The protein localises to the cytosol. It is found in the perinuclear region. The protein resides in the cytoskeleton. Its subcellular location is the microtubule organizing center. It localises to the centrosome. Functionally, RNA-binding protein involved in modulation of mRNA transcription by Polymerase II. Component of the tRNA-splicing ligase complex and is required for tRNA ligation. May be required for RNA transport. (Microbial infection) In case of infection by influenza virus A (IVA), is involved in viral replication. In Homo sapiens (Human), this protein is RNA transcription, translation and transport factor protein.